The chain runs to 357 residues: RNA-binding protein 4B (357 aa).

RRM domains are found at residues 2-72 (VKLF…ASKN) and 78-148 (TKLH…LSTS). The CCHC-type zinc-finger motif lies at 160–177 (SGCYRCGKEGHWSKECPV). The segment at 196-357 (AVRTPYTMGY…YVDRTRYSAF (162 aa)) is interaction with TNPO3.

Interacts with TNPO3, which may mediate nuclear import of the protein. Expressed in the suprachiasmatic nucleus (SCN) (at protein level). Expressed in the suprachiasmatic nucleus (SCN).

It localises to the nucleus. It is found in the nucleolus. Required for the translational activation of PER1 mRNA in response to circadian clock. Binds directly to the 3'-UTR of the PER1 mRNA. In Mus musculus (Mouse), this protein is RNA-binding protein 4B (Rbm4b).